We begin with the raw amino-acid sequence, 185 residues long: Ribosome-recycling factor (185 aa).

The tract at residues 136–161 is disordered; it reads MDSLKTDEKKGEIGEDDRKRRETEVQ.

The protein belongs to the RRF family.

Its subcellular location is the cytoplasm. Functionally, responsible for the release of ribosomes from messenger RNA at the termination of protein biosynthesis. May increase the efficiency of translation by recycling ribosomes from one round of translation to another. The protein is Ribosome-recycling factor of Rhizorhabdus wittichii (strain DSM 6014 / CCUG 31198 / JCM 15750 / NBRC 105917 / EY 4224 / RW1) (Sphingomonas wittichii).